The sequence spans 259 residues: Cytosolic Fe-S cluster assembly factor Nubp2 homolog (259 aa).

Residue 14–21 (GKGGVGKS) participates in ATP binding. Cys188 and Cys191 together coordinate [4Fe-4S] cluster.

Belongs to the Mrp/NBP35 ATP-binding proteins family. NUBP2/CFD1 subfamily. In terms of assembly, heterotetramer of 2 Nubp1 and 2 Nubp2 chains. [4Fe-4S] cluster is required as a cofactor.

It localises to the cytoplasm. In terms of biological role, component of the cytosolic iron-sulfur (Fe/S) protein assembly (CIA) machinery. Required for maturation of extramitochondrial Fe-S proteins. The Nubp1-Nubp2 heterotetramer forms a Fe-S scaffold complex, mediating the de novo assembly of an Fe-S cluster and its transfer to target apoproteins. This Aedes aegypti (Yellowfever mosquito) protein is Cytosolic Fe-S cluster assembly factor Nubp2 homolog.